The chain runs to 142 residues: Transcription antitermination protein NusB (142 aa).

It belongs to the NusB family.

Its function is as follows. Involved in transcription antitermination. Required for transcription of ribosomal RNA (rRNA) genes. Binds specifically to the boxA antiterminator sequence of the ribosomal RNA (rrn) operons. The chain is Transcription antitermination protein NusB from Persephonella marina (strain DSM 14350 / EX-H1).